The following is a 400-amino-acid chain: Acetate kinase (400 aa).

Asn-7 lines the Mg(2+) pocket. An ATP-binding site is contributed by Lys-14. Arg-91 contacts substrate. Asp-148 serves as the catalytic Proton donor/acceptor. ATP is bound by residues 208 to 212 (HVGNG), 283 to 285 (DMR), and 331 to 335 (GVGEN). Glu-385 is a Mg(2+) binding site.

The protein belongs to the acetokinase family. As to quaternary structure, homodimer. Requires Mg(2+) as cofactor. Mn(2+) serves as cofactor.

Its subcellular location is the cytoplasm. The catalysed reaction is acetate + ATP = acetyl phosphate + ADP. Its pathway is metabolic intermediate biosynthesis; acetyl-CoA biosynthesis; acetyl-CoA from acetate: step 1/2. Functionally, catalyzes the formation of acetyl phosphate from acetate and ATP. Can also catalyze the reverse reaction. This chain is Acetate kinase, found in Parabacteroides distasonis (strain ATCC 8503 / DSM 20701 / CIP 104284 / JCM 5825 / NCTC 11152).